The chain runs to 205 residues: Small ribosomal subunit protein uS2 (205 aa).

Belongs to the universal ribosomal protein uS2 family.

This Aeropyrum pernix (strain ATCC 700893 / DSM 11879 / JCM 9820 / NBRC 100138 / K1) protein is Small ribosomal subunit protein uS2 (rps2).